Consider the following 297-residue polypeptide: Giardin subunit alpha-6 (297 aa).

4 Annexin repeats span residues 3-72 (TTVQ…AYLW), 74-146 (KPGD…HWIL), 153-222 (FDID…AAHY), and 226-295 (HPAR…ILWR).

Belongs to the annexin family. Giardin subunit alpha subfamily.

Its subcellular location is the cytoplasm. The protein localises to the cytoskeleton. Functionally, giardins are involved in parasite attachment to the intestinal mucosa and in the cytoskeletal disassembly and reassembly that marks the transition from infectious trophozoite to transmissible cyst. They may interact with other cytoskeletal proteins such as microtubules in the microribbons or crossbridges, to maintain the integrity of the ventral disk. This chain is Giardin subunit alpha-6, found in Giardia intestinalis (Giardia lamblia).